Consider the following 360-residue polypeptide: Meiosis-inducing protein 1 (360 aa).

The segment at 102-135 is disordered; it reads SKETKTTKDCTMATGPERGKKSSESTRSSSLSSL. A compositionally biased stretch (low complexity) spans 126–135; sequence STRSSSLSSL.

Interacts with UME6.

It localises to the nucleus. Transcription factor required for sporulation and for early sporulation-specific genes expression. Positive regulator of SME1/IME2 expression. Directly activates expression of SLZ1 during meiosis. This chain is Meiosis-inducing protein 1 (IME1), found in Saccharomyces cerevisiae (strain ATCC 204508 / S288c) (Baker's yeast).